Reading from the N-terminus, the 122-residue chain is Large ribosomal subunit protein uL14c (122 aa).

It belongs to the universal ribosomal protein uL14 family. As to quaternary structure, part of the 50S ribosomal subunit.

It is found in the plastid. The protein resides in the chloroplast. Its function is as follows. Binds to 23S rRNA. This Drimys granadensis protein is Large ribosomal subunit protein uL14c.